Consider the following 135-residue polypeptide: Methylglyoxal synthase (135 aa).

The MGS-like domain occupies 1–135 (MPKRRRIALI…AQPDPKEIHA (135 aa)). Residues His-12, Lys-16, 38-41 (TGTT), and 58-59 (SG) contribute to the substrate site. The Proton donor/acceptor role is filled by Asp-64. His-91 contacts substrate.

Belongs to the methylglyoxal synthase family.

It catalyses the reaction dihydroxyacetone phosphate = methylglyoxal + phosphate. Functionally, catalyzes the formation of methylglyoxal from dihydroxyacetone phosphate. The sequence is that of Methylglyoxal synthase from Ralstonia nicotianae (strain ATCC BAA-1114 / GMI1000) (Ralstonia solanacearum).